The primary structure comprises 478 residues: Amino acid oxidase imqH (478 aa).

The N-terminal stretch at 1-22 (MPAPKSIIIVGSGVFGLSTAHA) is a signal peptide. Positions 14, 15, 38, 53, 57, 58, 63, and 64 each coordinate FAD. N-linked (GlcNAc...) asparagine glycans are attached at residues N97 and N167. Position 208 (V208) interacts with FAD. S-8alpha-FAD cysteine is present on C399. F432 and K433 together coordinate FAD.

This sequence belongs to the MSOX/MTOX family. In terms of assembly, dimer. FAD serves as cofactor.

Its pathway is secondary metabolite biosynthesis. Its function is as follows. Nonribosomal peptide synthetase; part of the gene cluster that mediates the biosynthesis of imizoquins A to D, tripeptide-derived alkaloids that serve a protective role against oxidative stress that are essential for normal germination. ImqB is a canonical three-module NRPS that assembles the tripeptide backbone of the imizoquins via condensation of Trp, Tyr, and Leu-derived precursors. N-methylation by imqF and phenol oxidation by imqC, followed by cyclization via the FAD-dependent oxidase imqH carry out the three-step transformation of L-tyrosine into tetrahydroisoquinoline. Importantly, this sequence requires the presence of a free amine in the tyrosine moiety, indicating that isoquinoline formation occurs prior to peptide bond formation. The imidazolidin-4-one ring of imizoquins could form following additional oxidation of the methyl-derived bridgehead carbon by imqH. Lastly, O-methylation by imqG and leucine hydroxylation by imqE complete biosynthesis of the imizoquins. The sequence is that of Amino acid oxidase imqH from Aspergillus flavus (strain ATCC 200026 / FGSC A1120 / IAM 13836 / NRRL 3357 / JCM 12722 / SRRC 167).